A 149-amino-acid polypeptide reads, in one-letter code: Transcriptional repressor NrdR (149 aa).

A zinc finger lies at cysteine 3–cysteine 34. The 91-residue stretch at proline 49–glutamate 139 folds into the ATP-cone domain.

This sequence belongs to the NrdR family. Requires Zn(2+) as cofactor.

Functionally, negatively regulates transcription of bacterial ribonucleotide reductase nrd genes and operons by binding to NrdR-boxes. This chain is Transcriptional repressor NrdR, found in Shewanella sediminis (strain HAW-EB3).